A 68-amino-acid chain; its full sequence is Medusin-DA1 (68 aa).

The N-terminal stretch at 1–22 (MAFLKKSLFLVLFLGLVSLSVC) is a signal peptide. A propeptide spanning residues 23–48 (EEEKRENEEEKNEQEEDDREERNEEK) is cleaved from the precursor. The tract at residues 25-47 (EKRENEEEKNEQEEDDREERNEE) is disordered. Acidic residues predominate over residues 31–41 (EEKNEQEEDDR). Residue leucine 67 is modified to Leucine amide.

The protein belongs to the frog skin active peptide (FSAP) family. Medusin subfamily. In terms of tissue distribution, expressed by the skin glands.

The protein resides in the secreted. Antimicrobial peptide with activity against Gram-positive bacteria (S.aureus, MIC=32 mg/L) and fungi (C.albicans, MIC=64 mg/L). Shows weak hemolytic activity. The polypeptide is Medusin-DA1 (Agalychnis dacnicolor (Giant Mexican leaf frog)).